The chain runs to 455 residues: MPKSAVSLFAILLLAASVITACSPQTRPDAMSVVQERQVLRVGTLINPTSYYFDHDREQGFEYDLAKRFADRLGVELEMVPRFDVNDLFTMLRRGEVDIVAAGLDRTSTRAQLFRFSPPYDIISQKVVFKQGSRQRPRDLQQITDGEIVVVEGSSHHEFLKSLGDSIPTLKWRATRDHDAVELLQMVISGEVDYTITDSTALDIQRRFHPDLSVAFTVKHDQDIAWALPQGKDDSLFAAVIEYFGEIRSSGRLAHIKEQHFGHVKQFNYVTTSLFIEAVEQVLPGYIETFKEHSGSLDWRLLAAISYQESLWNPRAVSPTGVRGMMMLTLPTAKAMGVKSRLNAEQSIRGGARYLERMLNRVPARIPQPDRTWFAIAAYNIGFGHLEDARIITERQGGNPDRWVDVKKRLPLLRQKQFYRHTRYGFARGDEPVTYVGNIRRFYDTLKYLDEQGRL.

The signal sequence occupies residues 1–21 (MPKSAVSLFAILLLAASVITA). Positions 22-264 (CSPQTRPDAM…HIKEQHFGHV (243 aa)) are non-LT domain. The segment at 265–455 (KQFNYVTTSL…LKYLDEQGRL (191 aa)) is LT domain. Glutamate 309 is an active-site residue.

In the N-terminal section; belongs to the bacterial solute-binding protein 3 family. The protein in the C-terminal section; belongs to the transglycosylase Slt family.

Its subcellular location is the cell outer membrane. It carries out the reaction Exolytic cleavage of the (1-&gt;4)-beta-glycosidic linkage between N-acetylmuramic acid (MurNAc) and N-acetylglucosamine (GlcNAc) residues in peptidoglycan, from either the reducing or the non-reducing ends of the peptidoglycan chains, with concomitant formation of a 1,6-anhydrobond in the MurNAc residue.. Functionally, murein-degrading enzyme that degrades murein glycan strands and insoluble, high-molecular weight murein sacculi, with the concomitant formation of a 1,6-anhydromuramoyl product. Lytic transglycosylases (LTs) play an integral role in the metabolism of the peptidoglycan (PG) sacculus. Their lytic action creates space within the PG sacculus to allow for its expansion as well as for the insertion of various structures such as secretion systems and flagella. The chain is Membrane-bound lytic murein transglycosylase F from Idiomarina loihiensis (strain ATCC BAA-735 / DSM 15497 / L2-TR).